The sequence spans 249 residues: 5'-nucleotidase SurE (249 aa).

The a divalent metal cation site is built by Asp8, Asp9, Ser39, and Asn91.

The protein belongs to the SurE nucleotidase family. The cofactor is a divalent metal cation.

It is found in the cytoplasm. It carries out the reaction a ribonucleoside 5'-phosphate + H2O = a ribonucleoside + phosphate. Nucleotidase that shows phosphatase activity on nucleoside 5'-monophosphates. This chain is 5'-nucleotidase SurE, found in Stutzerimonas stutzeri (strain A1501) (Pseudomonas stutzeri).